We begin with the raw amino-acid sequence, 337 residues long: Phosphate acyltransferase (337 aa).

The protein belongs to the PlsX family. In terms of assembly, homodimer. Probably interacts with PlsY.

Its subcellular location is the cytoplasm. It carries out the reaction a fatty acyl-[ACP] + phosphate = an acyl phosphate + holo-[ACP]. It participates in lipid metabolism; phospholipid metabolism. Functionally, catalyzes the reversible formation of acyl-phosphate (acyl-PO(4)) from acyl-[acyl-carrier-protein] (acyl-ACP). This enzyme utilizes acyl-ACP as fatty acyl donor, but not acyl-CoA. This chain is Phosphate acyltransferase, found in Aromatoleum aromaticum (strain DSM 19018 / LMG 30748 / EbN1) (Azoarcus sp. (strain EbN1)).